A 35-amino-acid chain; its full sequence is uncharacterized protein (35 aa).

The segment covering 1 to 27 has biased composition (low complexity); sequence MDQNEANIYNENNENNENNENENCQNE. Residues 1–35 form a disordered region; the sequence is MDQNEANIYNENNENNENNENENCQNEPIRIKIII.

This is an uncharacterized protein from Dictyostelium discoideum (Social amoeba).